We begin with the raw amino-acid sequence, 1017 residues long: Probable calcium-transporting ATPase 8, plasma membrane-type (1017 aa).

Residues 1 to 153 (MEKLDRYLQE…FVWDAFQDMT (153 aa)) are Cytoplasmic-facing. The next 2 membrane-spanning stretches (helical) occupy residues 154–174 (LIIL…TEGW) and 177–197 (GMYD…VTAV). Residues 198–228 (SDYKQSLQFKELDNEKKKIFIHVTRDGRRQK) lie on the Cytoplasmic side of the membrane. 2 consecutive transmembrane segments (helical) span residues 229-249 (ISIY…DQVP) and 331-351 (VATV…LVLL). Over 352-384 (VRFLIDKGMTVGLLKWYSTDALTIVNYFATAVT) the chain is Cytoplasmic. The helical transmembrane segment at 385–405 (IIVVAVPEGLPLAVTLSLAFA) threads the bilayer. Asp434 (4-aspartylphosphate intermediate) is an active-site residue. 2 residues coordinate Mg(2+): Asp736 and Asp740. A helical transmembrane segment spans residues 803 to 823 (IVALVINFVSACITGSAPLTA). Over 824–825 (VQ) the chain is Cytoplasmic. Transmembrane regions (helical) follow at residues 826 to 846 (LLWV…TEPP) and 875 to 895 (SLYQ…LLNI). Residues 896-938 (KGADSKSIINTLIFNSFVFCQVFNEINSREMQKINVFRGIISN) lie on the Cytoplasmic side of the membrane. Helical transmembrane passes span 939–959 (WIFI…IEFL) and 973–993 (WLLS…LKCI). At 994-1017 (PVGSGETSATPNGYRPLANGPDDI) the chain is on the cytoplasmic side.

It belongs to the cation transport ATPase (P-type) (TC 3.A.3) family. Type IIB subfamily.

It localises to the membrane. It carries out the reaction Ca(2+)(in) + ATP + H2O = Ca(2+)(out) + ADP + phosphate + H(+). With respect to regulation, activated by calmodulin. In terms of biological role, this magnesium-dependent enzyme catalyzes the hydrolysis of ATP coupled with the translocation of calcium from the cytosol out of the cell, into the endoplasmic reticulum, or into organelles. The polypeptide is Probable calcium-transporting ATPase 8, plasma membrane-type (Oryza sativa subsp. japonica (Rice)).